The following is a 219-amino-acid chain: Orotate phosphoribosyltransferase (219 aa).

K26 serves as a coordination point for 5-phospho-alpha-D-ribose 1-diphosphate. An orotate-binding site is contributed by 34-35 (FF). Residues 72–73 (YK), R102, K103, K106, H108, and 128–136 (DDVITAGTA) contribute to the 5-phospho-alpha-D-ribose 1-diphosphate site. Residues T132 and R160 each coordinate orotate.

The protein belongs to the purine/pyrimidine phosphoribosyltransferase family. PyrE subfamily. As to quaternary structure, homodimer.

The enzyme catalyses orotidine 5'-phosphate + diphosphate = orotate + 5-phospho-alpha-D-ribose 1-diphosphate. Its pathway is pyrimidine metabolism; UMP biosynthesis via de novo pathway; UMP from orotate: step 1/2. Its function is as follows. Catalyzes the transfer of a ribosyl phosphate group from 5-phosphoribose 1-diphosphate to orotate, leading to the formation of orotidine monophosphate (OMP). This chain is Orotate phosphoribosyltransferase (URA5), found in Yarrowia lipolytica (strain CLIB 122 / E 150) (Yeast).